A 331-amino-acid chain; its full sequence is Aromatic 2-oxoacid reductase (331 aa).

NAD(+) contacts are provided by residues 154–155 (RI), aspartate 175, 205–206 (AP), asparagine 211, 232–234 (AAR), and aspartate 258. Residue arginine 234 is part of the active site. The active site involves glutamate 263. Histidine 295 acts as the Proton donor in catalysis.

It belongs to the D-isomer specific 2-hydroxyacid dehydrogenase family.

It carries out the reaction (R)-3-phenyllactate + NAD(+) = 3-phenylpyruvate + NADH + H(+). It catalyses the reaction (2R)-2-hydroxy-3-(4-hydroxyphenyl)propanoate + NAD(+) = 3-(4-hydroxyphenyl)pyruvate + NADH + H(+). The enzyme catalyses 3-(indol-3-yl)lactate + NAD(+) = indole-3-pyruvate + NADH + H(+). The protein operates within amino-acid degradation. Essential for the reductive metabolism of L-phenylalanine, L-tyrosine and L-tryptophan. Catalyzes the conversion of phenylpyruvic acid to phenyllactic acid, 4-hydroxy-phenylpyruvic acid to 4-hydroxy-phenyllactic acid, and indolepyruvic acid to indolelactic acid. The chain is Aromatic 2-oxoacid reductase from Clostridium sporogenes (strain ATCC 15579).